Consider the following 433-residue polypeptide: Urokinase-type plasminogen activator (433 aa).

Positions 1–20 (MRVLLACLLVCALVVSDSDG) are cleaved as a signal peptide. Residues 29–65 (GESNCGCLNGGKCVTYKYFSNIQRCSCPKKFQGEHCE) enclose the EGF-like domain. Intrachain disulfides connect Cys-33–Cys-41, Cys-35–Cys-53, Cys-55–Cys-64, Cys-72–Cys-153, Cys-93–Cys-135, and Cys-124–Cys-148. Residues 36-59 (LNGGKCVTYKYFSNIQRCSCPKKF) form a binds urokinase plasminogen activator surface receptor region. Positions 72-153 (CYQGNGHSYR…FVQFCMVQDC (82 aa)) constitute a Kringle domain. Residues 154–180 (SVGKSPSSPREKEEFQCGQKALRPRFK) are connecting peptide. A Phosphoserine modification is found at Ser-160. 6 cysteine pairs are disulfide-bonded: Cys-170–Cys-301, Cys-211–Cys-227, Cys-219–Cys-290, Cys-315–Cys-384, Cys-347–Cys-363, and Cys-374–Cys-402. Residues 181–426 (IVGGQVTNAE…FLPWINTHTR (246 aa)) enclose the Peptidase S1 domain. Active-site charge relay system residues include His-226 and Asp-277. Ser-378 functions as the Charge relay system in the catalytic mechanism.

It belongs to the peptidase S1 family. Found in high and low molecular mass forms. Each consists of two chains, A and B. The high molecular mass form contains a long chain A which is cleaved to yield a short chain A. Forms heterodimer with SERPINA5. Binds LRP1B; binding is followed by internalization and degradation. Interacts with MRC2. Interacts with PLAUR. In complex with SERPINE1, interacts with PLAUR/uPAR. Interacts with SORL1 and LRP1, either alone or in complex with SERPINE1; these interactions are abolished in the presence of LRPAP1/RAP. The ternary complex composed of PLAUR-PLAU-PAI1 also interacts with SORLA. Produced as an inactive single-chain protein (pro-uPA or sc-uPA), is processed into the active disulfide-linked two-chain form of PLAU/uPA by a proteolytic event mediated, at least, by TMPRSS4.

It localises to the secreted. It catalyses the reaction Specific cleavage of Arg-|-Val bond in plasminogen to form plasmin.. Its activity is regulated as follows. Inhibited by SERPINA5. Inhibited by SERPINE1. In terms of biological role, specifically cleaves the zymogen plasminogen to form the active enzyme plasmin. In Bos taurus (Bovine), this protein is Urokinase-type plasminogen activator (PLAU).